We begin with the raw amino-acid sequence, 198 residues long: MEIIALGVEPRIIRKKEAAKLRKTGIVPAVIYHKGEETISVSVNEIALKKLVHSAESHIIDLKFPDGKTVRSFIKDVQFDPVTDRIIHTDFQLFSADELVEMDVPVGTTGDAVGVEKGGRIQIIKHALTLKGMPADMPDHFLIDCTNLEIGHSIHVREIPMDARPGLTIMDDPDTPVVTIVAPKKEAEPAAETAVSAS.

This sequence belongs to the bacterial ribosomal protein bL25 family. CTC subfamily. Part of the 50S ribosomal subunit; part of the 5S rRNA/L5/L18/L25 subcomplex. Contacts the 5S rRNA. Binds to the 5S rRNA independently of L5 and L18.

Its function is as follows. This is one of the proteins that binds to the 5S RNA in the ribosome where it forms part of the central protuberance. The chain is Large ribosomal subunit protein bL25 from Chlorobium phaeobacteroides (strain DSM 266 / SMG 266 / 2430).